A 1367-amino-acid chain; its full sequence is Probable serine/threonine-protein kinase pkgA (1367 aa).

Disordered regions lie at residues Ile-140 to Ile-164, Lys-264 to Arg-429, Pro-456 to Pro-556, and Pro-771 to Val-792. Low complexity predominate over residues Asn-143–Lys-162. The span at Ile-271–Gln-282 shows a compositional bias: pro residues. Over residues Glu-287–Ile-326 the composition is skewed to basic and acidic residues. Low complexity predominate over residues Ile-340 to Gln-381. Residues Ala-399–Thr-421 are compositionally biased toward polar residues. The span at Gly-506 to Asn-517 shows a compositional bias: acidic residues. Positions Leu-531–His-544 are enriched in basic residues. Residues Phe-810–Phe-1236 enclose the Protein kinase domain. ATP contacts are provided by residues Ile-816–Val-824 and Lys-839. Asp-933 (proton acceptor) is an active-site residue. 3 disordered regions span residues Phe-971–Thr-1034, Phe-1084–His-1134, and Gln-1288–Ala-1312. Residues Asn-979 to Gly-1015 show a composition bias toward low complexity. Polar residues predominate over residues Asn-1025 to Thr-1034. Composition is skewed to low complexity over residues Gln-1092 to Thr-1125 and Ser-1294 to Ala-1312. In terms of domain architecture, AGC-kinase C-terminal spans Lys-1237 to Asn-1347.

It belongs to the protein kinase superfamily. AGC Ser/Thr protein kinase family.

The enzyme catalyses L-seryl-[protein] + ATP = O-phospho-L-seryl-[protein] + ADP + H(+). It catalyses the reaction L-threonyl-[protein] + ATP = O-phospho-L-threonyl-[protein] + ADP + H(+). In Dictyostelium discoideum (Social amoeba), this protein is Probable serine/threonine-protein kinase pkgA (pkgA).